The sequence spans 166 residues: D-aminoacyl-tRNA deacylase (166 aa).

The short motif at 142–143 (GP) is the Gly-cisPro motif, important for rejection of L-amino acids element.

The protein belongs to the DTD family. In terms of assembly, homodimer.

The protein localises to the cytoplasm. It carries out the reaction glycyl-tRNA(Ala) + H2O = tRNA(Ala) + glycine + H(+). The catalysed reaction is a D-aminoacyl-tRNA + H2O = a tRNA + a D-alpha-amino acid + H(+). An aminoacyl-tRNA editing enzyme that deacylates mischarged D-aminoacyl-tRNAs. Also deacylates mischarged glycyl-tRNA(Ala), protecting cells against glycine mischarging by AlaRS. Acts via tRNA-based rather than protein-based catalysis; rejects L-amino acids rather than detecting D-amino acids in the active site. By recycling D-aminoacyl-tRNA to D-amino acids and free tRNA molecules, this enzyme counteracts the toxicity associated with the formation of D-aminoacyl-tRNA entities in vivo and helps enforce protein L-homochirality. This is D-aminoacyl-tRNA deacylase from Ralstonia nicotianae (strain ATCC BAA-1114 / GMI1000) (Ralstonia solanacearum).